Reading from the N-terminus, the 914-residue chain is Protein translocase subunit SecA (914 aa).

Residues Q87, 105-109, and D508 each bind ATP; that span reads GEGKT. 4 residues coordinate Zn(2+): C898, C900, C909, and H910.

Belongs to the SecA family. In terms of assembly, monomer and homodimer. Part of the essential Sec protein translocation apparatus which comprises SecA, SecYEG and auxiliary proteins SecDF-YajC and YidC. The cofactor is Zn(2+).

The protein resides in the cell inner membrane. Its subcellular location is the cytoplasm. The catalysed reaction is ATP + H2O + cellular proteinSide 1 = ADP + phosphate + cellular proteinSide 2.. Its function is as follows. Part of the Sec protein translocase complex. Interacts with the SecYEG preprotein conducting channel. Has a central role in coupling the hydrolysis of ATP to the transfer of proteins into and across the cell membrane, serving both as a receptor for the preprotein-SecB complex and as an ATP-driven molecular motor driving the stepwise translocation of polypeptide chains across the membrane. This chain is Protein translocase subunit SecA, found in Xylella fastidiosa (strain M12).